A 226-amino-acid polypeptide reads, in one-letter code: Probable transaldolase (226 aa).

Lys-91 serves as the catalytic Schiff-base intermediate with substrate.

Belongs to the transaldolase family. Type 3B subfamily.

The protein localises to the cytoplasm. It carries out the reaction D-sedoheptulose 7-phosphate + D-glyceraldehyde 3-phosphate = D-erythrose 4-phosphate + beta-D-fructose 6-phosphate. The protein operates within carbohydrate degradation; pentose phosphate pathway; D-glyceraldehyde 3-phosphate and beta-D-fructose 6-phosphate from D-ribose 5-phosphate and D-xylulose 5-phosphate (non-oxidative stage): step 2/3. Transaldolase is important for the balance of metabolites in the pentose-phosphate pathway. This chain is Probable transaldolase, found in Chlorobium phaeobacteroides (strain DSM 266 / SMG 266 / 2430).